Reading from the N-terminus, the 247-residue chain is 14-3-3 protein gamma-1 (247 aa).

It belongs to the 14-3-3 family. Homodimer, and heterodimer with other family members.

It localises to the cytoplasm. Adapter protein implicated in the regulation of a large spectrum of both general and specialized signaling pathways. Binds to a large number of partners, usually by recognition of a phosphoserine or phosphothreonine motif. Binding generally results in the modulation of the activity of the binding partner. In Danio rerio (Zebrafish), this protein is 14-3-3 protein gamma-1 (ywhag1).